The chain runs to 363 residues: DNA replication and repair protein RecF (363 aa).

33 to 40 (GDNGQGKT) provides a ligand contact to ATP.

It belongs to the RecF family.

The protein localises to the cytoplasm. Its function is as follows. The RecF protein is involved in DNA metabolism; it is required for DNA replication and normal SOS inducibility. RecF binds preferentially to single-stranded, linear DNA. It also seems to bind ATP. This Tropheryma whipplei (strain TW08/27) (Whipple's bacillus) protein is DNA replication and repair protein RecF.